The chain runs to 118 residues: Eukaryotic translation initiation factor 4E-binding protein 1 (118 aa).

Serine 2 carries the N-acetylserine modification. Residues 27 to 48 (VQLPPGDYSTTPGGTLFSTTPG) form a disordered region. A compositionally biased stretch (polar residues) spans 34-48 (YSTTPGGTLFSTTPG). Residue threonine 37 is modified to Phosphothreonine; by MTOR. Threonine 41 carries the phosphothreonine modification. Serine 44 is modified (phosphoserine). Threonine 46 is subject to Phosphothreonine; by MTOR. Threonine 50 carries the post-translational modification Phosphothreonine. Tyrosine 54 carries the phosphotyrosine modification. Positions 54–60 (YDRKFLM) match the YXXXXLphi motif motif. Lysine 57 participates in a covalent cross-link: Glycyl lysine isopeptide (Lys-Gly) (interchain with G-Cter in ubiquitin). The interval 64–118 (NSPVTKTPPRDLPTIPGVTSPTGDEPPTEARQNHLRSSPEDKPAGGEESQFEMDI) is disordered. Position 65 is a phosphoserine; by DYRK2, MAPK1, MAPK3 and MTOR (serine 65). Threonine 70 carries the phosphothreonine; by MTOR modification. Threonine 77 carries the post-translational modification Phosphothreonine. A phosphoserine mark is found at serine 83 and serine 100. Serine 101 bears the Phosphoserine; by DYRK2 mark. A Phosphoserine modification is found at serine 112. A TOS motif motif is present at residues 114–118 (FEMDI).

This sequence belongs to the eIF4E-binding protein family. In terms of assembly, hypophosphorylated EIF4EBP1 competes with EIF4G1/EIF4G3 to interact with EIF4E; insulin stimulated MAP-kinase (MAPK1 and MAPK3) or mTORC1 phosphorylation of EIF4EBP1 causes dissociation of the complex allowing EIF4G1/EIF4G3 to bind and consequent initiation of translation. Interacts (via TOS motif) with RPTOR; promoting phosphorylation by mTORC1. Post-translationally, phosphorylated on serine and threonine residues in response to insulin, EGF and PDGF. Phosphorylation at Thr-37, Thr-46, Ser-65 and Thr-70, corresponding to the hyperphosphorylated form, is regulated by mTORC1 and abolishes binding to EIF4E. In terms of processing, ubiquitinated: when eIF4E levels are low, hypophosphorylated form is ubiquitinated by the BCR(KLHL25) complex, leading to its degradation and serving as a homeostatic mechanism to maintain translation and prevent eIF4E inhibition when eIF4E levels are low. Not ubiquitinated when hyperphosphorylated (at Thr-37, Thr-46, Ser-65 and Thr-70) or associated with eIF4E.

It is found in the cytoplasm. The protein resides in the nucleus. Its function is as follows. Repressor of translation initiation that regulates EIF4E activity by preventing its assembly into the eIF4F complex: hypophosphorylated form competes with EIF4G1/EIF4G3 and strongly binds to EIF4E, leading to repress translation. In contrast, hyperphosphorylated form dissociates from EIF4E, allowing interaction between EIF4G1/EIF4G3 and EIF4E, leading to initiation of translation. Mediates the regulation of protein translation by hormones, growth factors and other stimuli that signal through the MAP kinase and mTORC1 pathways. The polypeptide is Eukaryotic translation initiation factor 4E-binding protein 1 (EIF4EBP1) (Bos taurus (Bovine)).